The following is a 369-amino-acid chain: UDP-glucose 4-epimerase 4 (369 aa).

Residue 19–50 (TVLVTGGAGYIGSHTVLQLLAAGFRVVVADSL) participates in NAD(+) binding. Substrate is bound at residue serine 144. The active-site Proton acceptor is tyrosine 168.

This sequence belongs to the NAD(P)-dependent epimerase/dehydratase family. The cofactor is NAD(+).

The enzyme catalyses UDP-alpha-D-glucose = UDP-alpha-D-galactose. It participates in carbohydrate metabolism; galactose metabolism. Its function is as follows. Catalyzes the interconversion between UDP-glucose and UDP-galactose. In Oryza sativa subsp. japonica (Rice), this protein is UDP-glucose 4-epimerase 4 (UGE-4).